We begin with the raw amino-acid sequence, 457 residues long: UDP-N-acetylglucosamine 1-carboxyvinyltransferase (457 aa).

34–35 (KN) lines the phosphoenolpyruvate pocket. R104 serves as a coordination point for UDP-N-acetyl-alpha-D-glucosamine. The active-site Proton donor is the C128. Residue C128 is modified to 2-(S-cysteinyl)pyruvic acid O-phosphothioketal. UDP-N-acetyl-alpha-D-glucosamine-binding residues include D319 and I341. The disordered stretch occupies residues 436–457 (INKSKNRSSNSKLKEVSEIRAA). Residues 447-457 (KLKEVSEIRAA) are compositionally biased toward basic and acidic residues.

The protein belongs to the EPSP synthase family. MurA subfamily.

The protein resides in the cytoplasm. It carries out the reaction phosphoenolpyruvate + UDP-N-acetyl-alpha-D-glucosamine = UDP-N-acetyl-3-O-(1-carboxyvinyl)-alpha-D-glucosamine + phosphate. Its pathway is cell wall biogenesis; peptidoglycan biosynthesis. Cell wall formation. Adds enolpyruvyl to UDP-N-acetylglucosamine. The protein is UDP-N-acetylglucosamine 1-carboxyvinyltransferase of Prochlorococcus marinus subsp. pastoris (strain CCMP1986 / NIES-2087 / MED4).